Consider the following 152-residue polypeptide: Small ribosomal subunit protein uS8m (152 aa).

It belongs to the universal ribosomal protein uS8 family. As to quaternary structure, component of the mitochondrial small ribosomal subunit (mt-SSU). Mature yeast 74S mitochondrial ribosomes consist of a small (37S) and a large (54S) subunit. The 37S small subunit contains a 15S ribosomal RNA (15S mt-rRNA) and at least 32 different proteins. The 54S large subunit contains a 21S rRNA (21S mt-rRNA) and at least 45 different proteins.

The protein resides in the mitochondrion. Component of the mitochondrial ribosome (mitoribosome), a dedicated translation machinery responsible for the synthesis of mitochondrial genome-encoded proteins, including at least some of the essential transmembrane subunits of the mitochondrial respiratory chain. The mitoribosomes are attached to the mitochondrial inner membrane and translation products are cotranslationally integrated into the membrane. This Schizosaccharomyces pombe (strain 972 / ATCC 24843) (Fission yeast) protein is Small ribosomal subunit protein uS8m (mrps8).